Consider the following 220-residue polypeptide: Large ribosomal subunit protein bL25 (220 aa).

The span at 186 to 199 (ELEDEDEDEDEVAA) shows a compositional bias: acidic residues. A disordered region spans residues 186–220 (ELEDEDEDEDEVAADEVPATEVDDQAAVKEGEGKE). The span at 211–220 (AAVKEGEGKE) shows a compositional bias: basic and acidic residues.

It belongs to the bacterial ribosomal protein bL25 family. CTC subfamily. As to quaternary structure, part of the 50S ribosomal subunit; part of the 5S rRNA/L5/L18/L25 subcomplex. Contacts the 5S rRNA. Binds to the 5S rRNA independently of L5 and L18.

This is one of the proteins that binds to the 5S RNA in the ribosome where it forms part of the central protuberance. In Christiangramia forsetii (strain DSM 17595 / CGMCC 1.15422 / KT0803) (Gramella forsetii), this protein is Large ribosomal subunit protein bL25.